A 616-amino-acid chain; its full sequence is Schwannomin-interacting protein 1 homolog (616 aa).

Positions 38–50 (ESDLTDSDREDDP) are enriched in acidic residues. Disordered stretches follow at residues 38–71 (ESDLTDSDREDDPTFPSKMAKESGSETFKNGQDS), 204–251 (LKQT…PDTF), and 292–320 (SSLEIGGSGSQQNLDEDNNKVASRKYSNQ). 2 stretches are compositionally biased toward polar residues: residues 62 to 71 (SETFKNGQDS) and 204 to 217 (LKQTSSTRLSGNST). Residues 550 to 594 (LQLLVNNLQEYIENLNVTLLESLKERDDLNSDQDDILHDLEKINN) are a coiled coil.

The protein belongs to the SCHIP1 family. In terms of assembly, interacts with ex; the interaction results in recruitment of Schip1 to the apical cell membrane. Interacts with Tao; the interaction enhances Tao kinase activity. Interacts with Mer. In eye disks of the third instar larvae, expressed in all cells (at protein level).

It is found in the cell junction. The protein localises to the adherens junction. Its subcellular location is the apical cell membrane. Regulator of the Hippo/SWH (Sav/Wts/Hpo) signaling pathway, a signaling pathway that plays a pivotal role in organ size control and tumor suppression by restricting proliferation and promoting apoptosis. The core of this pathway is composed of a kinase cascade wherein Hippo (hpo), in complex with its regulatory protein Salvador (sav), phosphorylates and activates Warts (wts) in complex with its regulatory protein Mats, which in turn phosphorylates and inactivates the Yorkie (yki) oncoprotein. Schip1 promotes kinase activity of Tao and enhances phosphorylation of hpo by Tao. In Drosophila melanogaster (Fruit fly), this protein is Schwannomin-interacting protein 1 homolog.